A 125-amino-acid chain; its full sequence is Protein ApaG (125 aa).

Positions 1-125 constitute an ApaG domain; the sequence is MINSPRVCVQ…FRLAIPSLIN (125 aa).

In Sodalis glossinidius (strain morsitans), this protein is Protein ApaG.